Reading from the N-terminus, the 248-residue chain is Probable transcriptional regulatory protein Oter_1471 (248 aa).

The protein belongs to the TACO1 family.

Its subcellular location is the cytoplasm. This chain is Probable transcriptional regulatory protein Oter_1471, found in Opitutus terrae (strain DSM 11246 / JCM 15787 / PB90-1).